Consider the following 37-residue polypeptide: Large ribosomal subunit protein bL36 (37 aa).

It belongs to the bacterial ribosomal protein bL36 family.

This Staphylococcus saprophyticus subsp. saprophyticus (strain ATCC 15305 / DSM 20229 / NCIMB 8711 / NCTC 7292 / S-41) protein is Large ribosomal subunit protein bL36.